Reading from the N-terminus, the 106-residue chain is Small ribosomal subunit protein uS10 (106 aa).

This sequence belongs to the universal ribosomal protein uS10 family. In terms of assembly, part of the 30S ribosomal subunit.

Involved in the binding of tRNA to the ribosomes. The chain is Small ribosomal subunit protein uS10 from Pyrobaculum calidifontis (strain DSM 21063 / JCM 11548 / VA1).